Here is a 340-residue protein sequence, read N- to C-terminus: Phenylalanine--tRNA ligase alpha subunit (340 aa).

Glutamate 254 provides a ligand contact to Mg(2+).

It belongs to the class-II aminoacyl-tRNA synthetase family. Phe-tRNA synthetase alpha subunit type 1 subfamily. As to quaternary structure, tetramer of two alpha and two beta subunits. It depends on Mg(2+) as a cofactor.

It localises to the cytoplasm. The enzyme catalyses tRNA(Phe) + L-phenylalanine + ATP = L-phenylalanyl-tRNA(Phe) + AMP + diphosphate + H(+). This is Phenylalanine--tRNA ligase alpha subunit from Caldicellulosiruptor bescii (strain ATCC BAA-1888 / DSM 6725 / KCTC 15123 / Z-1320) (Anaerocellum thermophilum).